A 409-amino-acid chain; its full sequence is MFLNSLDLPGQPENSRIVVAMSGGVDSSVVAGLLKKEGYDVIGITLQLYDHGAATHRVGACCAGQDIEDARCVAETLGIPHYVLDYEERFREAVIDPFAASYAHGETPVPCIACNQTVKFADLLATARELDADALATGHYIRSRSHGAHRALFRPLDSDRDQSYFLFATTQEQIDYLRFPLGDLPKARVREMATEMGFVVANKHDSQDICFVPQGKYSDIITKLRPEAVNPGVIVHVDGQVLGKHSGIVHYTVGQRRGIGVATGEALYVVYLDVENARVIVGPREMLETHKLFLRDVNWLGDERLDNFPPDGIEMAVKVRSTRPPHLARLHYQEGVFSVDFLECENSVAPGQACVFYDGNSDGARVLGGGFVTHSERAAETEMMLKRVLCNLETTSAVASEFKTKVSYT.

Residues 20–27 (AMSGGVDS) and Leu-46 contribute to the ATP site. Cys-114 serves as the catalytic Nucleophile. Residues Cys-114 and Cys-210 are joined by a disulfide bond. Gly-138 contacts ATP. The segment at 160–162 (RDQ) is interaction with tRNA. The Cysteine persulfide intermediate role is filled by Cys-210.

It belongs to the MnmA/TRMU family.

It is found in the cytoplasm. It catalyses the reaction S-sulfanyl-L-cysteinyl-[protein] + uridine(34) in tRNA + AH2 + ATP = 2-thiouridine(34) in tRNA + L-cysteinyl-[protein] + A + AMP + diphosphate + H(+). Catalyzes the 2-thiolation of uridine at the wobble position (U34) of tRNA, leading to the formation of s(2)U34. The polypeptide is tRNA-specific 2-thiouridylase MnmA (Bartonella henselae (strain ATCC 49882 / DSM 28221 / CCUG 30454 / Houston 1) (Rochalimaea henselae)).